A 189-amino-acid polypeptide reads, in one-letter code: GTP cyclohydrolase 1 (189 aa).

Residues C78, H81, and C150 each coordinate Zn(2+).

It belongs to the GTP cyclohydrolase I family. As to quaternary structure, homomer.

It catalyses the reaction GTP + H2O = 7,8-dihydroneopterin 3'-triphosphate + formate + H(+). It participates in cofactor biosynthesis; 7,8-dihydroneopterin triphosphate biosynthesis; 7,8-dihydroneopterin triphosphate from GTP: step 1/1. The protein is GTP cyclohydrolase 1 of Bacillus cytotoxicus (strain DSM 22905 / CIP 110041 / 391-98 / NVH 391-98).